We begin with the raw amino-acid sequence, 130 residues long: uncharacterized protein (130 aa).

Residues 15-31 (LYLCPAIIRLSSVCTLA) traverse the membrane as a helical segment.

The protein resides in the membrane. This is an uncharacterized protein from Saccharomyces cerevisiae (strain ATCC 204508 / S288c) (Baker's yeast).